Consider the following 493-residue polypeptide: Sodium-coupled neutral amino acid symporter 2 (493 aa).

Over 1 to 72 (MNNAEVLNVA…LPGTTSFGMS (72 aa)) the chain is Cytoplasmic. Positions 1 to 92 (MNNAEVLNVA…SGILGLSYAM (92 aa)) are regulates protein turnover upon amino acid deprivation. The helical transmembrane segment at 73–92 (VFNLSNAIVGSGILGLSYAM) threads the bilayer. Position 78 (Asn78) interacts with Na(+). Over 93–98 (ANTGIA) the chain is Extracellular. Residues 99-119 (LFMILLVFVTVFSLYSIHLLL) form a helical membrane-spanning segment. Topologically, residues 120–154 (KTANEGGSLLYEQLGLKAFGIPGKLAASGSVTLQN) are cytoplasmic. A helical transmembrane segment spans residues 155-173 (IGAMSSYLYIVKYELPLVI). At 174-184 (KALMDIKESNG) the chain is on the extracellular side. A helical transmembrane segment spans residues 185–205 (EWYLNGDYLVIMVSLAIILPL). The Cytoplasmic portion of the chain corresponds to 206 to 213 (SLLRNLGY). The chain crosses the membrane as a helical span at residues 214–234 (LGYTSGFSPLCMVFFLIVVIY). The Extracellular segment spans residues 235–279 (KKFEIPCPLEAMNMTSNSSSHDHMAHNETDDEMCKPKYFVFNSQT). Cys241 and Cys268 form a disulfide bridge. Residues Asn247, Asn251, and Asn261 are each glycosylated (N-linked (GlcNAc...) asparagine). The chain crosses the membrane as a helical span at residues 280–300 (VYAVPILTFSFVCHPAVLPIY). At 301–316 (QELKGRSRRRMMNVSN) the chain is on the cytoplasmic side. A helical transmembrane segment spans residues 317–337 (VSFFAMFIMYLLAALFGYLTF). Residues 338–358 (YSKVEPELLHTYSKVFGAGVI) are Extracellular-facing. A helical transmembrane segment spans residues 359-379 (FVVVRLAVLMAVTLTVPIVIF). A Na(+)-binding site is contributed by Thr373. Residues 380-400 (PIRSSLNELFCSGKDFAWIRH) lie on the Cytoplasmic side of the membrane. Residues 401–421 (ILITFLILAFTNVLVIFVPTI) traverse the membrane as a helical segment. Over 422-423 (RD) the chain is Extracellular. Residues 424–444 (IFGFIGASAAAMLVFILPSAF) traverse the membrane as a helical segment. Residues 445 to 459 (YIRLVKKESMKSVQK) are Cytoplasmic-facing. The chain crosses the membrane as a helical span at residues 460 to 482 (IGALLFLIGGIIVMIGSMTLIIL). Residues 483 to 493 (DWIHNSTSGGN) lie on the Extracellular side of the membrane.

It belongs to the amino acid/polyamine transporter 2 family.

Its subcellular location is the cell membrane. The enzyme catalyses L-alanine(in) + Na(+)(in) = L-alanine(out) + Na(+)(out). It catalyses the reaction glycine(in) + Na(+)(in) = glycine(out) + Na(+)(out). It carries out the reaction L-serine(in) + Na(+)(in) = L-serine(out) + Na(+)(out). The catalysed reaction is L-proline(in) + Na(+)(in) = L-proline(out) + Na(+)(out). The enzyme catalyses L-methionine(in) + Na(+)(in) = L-methionine(out) + Na(+)(out). It catalyses the reaction L-histidine(in) + Na(+)(in) = L-histidine(out) + Na(+)(out). It carries out the reaction L-asparagine(in) + Na(+)(in) = L-asparagine(out) + Na(+)(out). The catalysed reaction is L-glutamine(in) + Na(+)(in) = L-glutamine(out) + Na(+)(out). The enzyme catalyses L-threonine(in) + Na(+)(in) = L-threonine(out) + Na(+)(out). It catalyses the reaction L-leucine(in) + Na(+)(in) = L-leucine(out) + Na(+)(out). It carries out the reaction L-phenylalanine(in) + Na(+)(in) = L-phenylalanine(out) + Na(+)(out). Its activity is regulated as follows. Inhibited by N-methyl-D-glucamine. Inhibited by choline. Allosteric regulation of sodium ions binding by pH. Functionally, symporter that cotransports neutral amino acids and sodium ions from the extracellular to the intracellular side of the cell membrane. The transport is pH-sensitive, Li(+)-intolerant, electrogenic, driven by the Na(+) electrochemical gradient and cotransports of neutral amino acids and sodium ions with a stoichiometry of 1:1. The polypeptide is Sodium-coupled neutral amino acid symporter 2 (Xenopus tropicalis (Western clawed frog)).